Reading from the N-terminus, the 253-residue chain is Vacuolar v-SNARE NYV1 (253 aa).

At 1–231 the chain is on the cytoplasmic side; sequence MKRFNVSYVE…EIMWWQKVKN (231 aa). The interval 147 to 166 is disordered; it reads LNSSGNGQSSNGNGQNTISD. The span at 148 to 162 shows a compositional bias: low complexity; it reads NSSGNGQSSNGNGQN. Positions 167–227 constitute a v-SNARE coiled-coil homology domain; the sequence is IGDATEDQIK…VNIKEIMWWQ (61 aa). The helical; Anchor for type IV membrane protein transmembrane segment at 232–252 threads the bilayer; it reads ITLLTFTIILFVSAAFMFFYL. Tryptophan 253 is a topological domain (vacuolar).

This sequence belongs to the synaptobrevin family. Present in a pentameric cis-SNARE complex composed of the v-SNAREs NYV1, VTI1 and YKT6, and the t-SNAREs VAM3 and VAM7 on vacuolar membranes. Interacts in trans with the cognate t-SNARE VAM3 during the docking step of homotypic vacuolar fusion. Interacts with the vacuolar transporter chaperone (VTC) complex and the vacuolar Ca(2+)-ATPase PMC1.

The protein resides in the vacuole membrane. In terms of biological role, vacuolar v-SNARE required for docking. Only involved in homotypic vacuole fusion. Required for Ca(2+) efflux from the vacuolar lumen, a required signal for subsequent membrane fusion events, by inhibiting vacuolar Ca(2+)-ATPase PMC1 and promoting Ca(2+) release when forming trans-SNARE assemblies during the docking step. The polypeptide is Vacuolar v-SNARE NYV1 (NYV1) (Saccharomyces cerevisiae (strain ATCC 204508 / S288c) (Baker's yeast)).